We begin with the raw amino-acid sequence, 333 residues long: tRNA uridine(34) hydroxylase (333 aa).

A Rhodanese domain is found at 123 to 217 (SDPEVILVDT…YLEEIKQEES (95 aa)). Catalysis depends on C177, which acts as the Cysteine persulfide intermediate.

Belongs to the TrhO family.

The catalysed reaction is uridine(34) in tRNA + AH2 + O2 = 5-hydroxyuridine(34) in tRNA + A + H2O. In terms of biological role, catalyzes oxygen-dependent 5-hydroxyuridine (ho5U) modification at position 34 in tRNAs. This Shewanella sp. (strain MR-7) protein is tRNA uridine(34) hydroxylase.